The primary structure comprises 288 residues: MTFRLRREALRTILTSDRCVNPGSVYDAISIRIAEDLGFPLGMFGGSAASLAILGDPDIALITLTELAEQMRRMSRAAVLPVLVDADHGYGNAMNVRRTVQELEAAGAAGLTIEDTSLPQAYGAAKPQLISLDEGVGKVKAALDGRGDSSLVILGRTGAVSITSLDDAIARARVYETCGVDGLFFTGITTRDQLDAIAAATNLPIVLGGAPEEMSDLGYLASRRVRIALQGHAPIAAATQAVYDTLKALRDGVSPKQLKGLPSAELTSRVMREADVKKRLRDFLGLGS.

Position 47 (Ser47) interacts with substrate. A Mg(2+)-binding site is contributed by Asp85. Substrate is bound by residues Arg156 and His232.

The protein belongs to the isocitrate lyase/PEP mutase superfamily. Oxaloacetate decarboxylase family. As to quaternary structure, homotetramer; dimer of dimers. Mg(2+) is required as a cofactor.

The enzyme catalyses oxaloacetate + H(+) = pyruvate + CO2. Its function is as follows. Catalyzes the decarboxylation of oxaloacetate into pyruvate. Seems to play a role in maintaining cellular concentrations of bicarbonate and pyruvate. The chain is Oxaloacetate decarboxylase from Bradyrhizobium sp. (strain ORS 278).